Consider the following 511-residue polypeptide: Xylose import ATP-binding protein XylG (511 aa).

2 consecutive ABC transporter domains span residues 6–244 and 261–506; these read LEMR…VGRE and FEAR…IGKP. Residue 38–45 participates in ATP binding; it reads GENGAGKS.

Belongs to the ABC transporter superfamily. Xylose importer (TC 3.A.1.2.4) family. In terms of assembly, the complex is composed of two ATP-binding proteins (XylG), two transmembrane proteins (XylH) and a solute-binding protein (XylF).

It is found in the cell inner membrane. The catalysed reaction is D-xylose(out) + ATP + H2O = D-xylose(in) + ADP + phosphate + H(+). In terms of biological role, part of the ABC transporter complex XylFGH involved in xylose import. Responsible for energy coupling to the transport system. The chain is Xylose import ATP-binding protein XylG from Brucella abortus (strain 2308).